The chain runs to 180 residues: Shikimate kinase (180 aa).

Residue 14–19 (GAGKSC) participates in ATP binding. Serine 18 provides a ligand contact to Mg(2+). Substrate contacts are provided by aspartate 36, arginine 60, and glycine 82. Arginine 120 is a binding site for ATP. Arginine 139 is a substrate binding site.

This sequence belongs to the shikimate kinase family. Monomer. Requires Mg(2+) as cofactor.

It is found in the cytoplasm. The catalysed reaction is shikimate + ATP = 3-phosphoshikimate + ADP + H(+). The protein operates within metabolic intermediate biosynthesis; chorismate biosynthesis; chorismate from D-erythrose 4-phosphate and phosphoenolpyruvate: step 5/7. Its function is as follows. Catalyzes the specific phosphorylation of the 3-hydroxyl group of shikimic acid using ATP as a cosubstrate. This is Shikimate kinase from Xanthomonas euvesicatoria pv. vesicatoria (strain 85-10) (Xanthomonas campestris pv. vesicatoria).